Consider the following 108-residue polypeptide: Class I hydrophobin 3 (108 aa).

The signal sequence occupies residues 1-17; the sequence is MFFQTTIVAALASLAVA. 4 cysteine pairs are disulfide-bonded: cysteine 28–cysteine 87, cysteine 35–cysteine 81, cysteine 36–cysteine 69, and cysteine 88–cysteine 101. Asparagine 37 carries an N-linked (GlcNAc...) asparagine glycan.

It belongs to the fungal hydrophobin family. As to quaternary structure, self-assembles to form functional amyloid fibrils called rodlets. Self-assembly into fibrillar rodlets occurs spontaneously at hydrophobic:hydrophilic interfaces and the rodlets further associate laterally to form amphipathic monolayers.

Its subcellular location is the secreted. The protein resides in the cell wall. Aerial growth, conidiation, and dispersal of filamentous fungi in the environment rely upon a capability of their secreting small amphipathic proteins called hydrophobins (HPBs) with low sequence identity. Class I can self-assemble into an outermost layer of rodlet bundles on aerial cell surfaces, conferring cellular hydrophobicity that supports fungal growth, development and dispersal; whereas Class II form highly ordered films at water-air interfaces through intermolecular interactions but contribute nothing to the rodlet structure. Vmh3 is a class I hydrophobin that is essential for the maintenance of the surface hydrophobicity of the mycelium and might be involved in the development of fruiting bodies. Plays an important role in hyphal resistance against environmental stress. Necessary for the efficient biodegradation of lignin. This Pleurotus ostreatus (strain PC15) (Oyster mushroom) protein is Class I hydrophobin 3.